A 268-amino-acid polypeptide reads, in one-letter code: Thiazole synthase (268 aa).

Residue K100 is the Schiff-base intermediate with DXP of the active site. 1-deoxy-D-xylulose 5-phosphate is bound by residues G161, 187–188, and 209–210; these read AG and NT. A disordered region spans residues 248 to 268; it reads ATPSSPSEGMITGSPHSAANN.

The protein belongs to the ThiG family. In terms of assembly, homotetramer. Forms heterodimers with either ThiH or ThiS.

The protein localises to the cytoplasm. It catalyses the reaction [ThiS sulfur-carrier protein]-C-terminal-Gly-aminoethanethioate + 2-iminoacetate + 1-deoxy-D-xylulose 5-phosphate = [ThiS sulfur-carrier protein]-C-terminal Gly-Gly + 2-[(2R,5Z)-2-carboxy-4-methylthiazol-5(2H)-ylidene]ethyl phosphate + 2 H2O + H(+). Its pathway is cofactor biosynthesis; thiamine diphosphate biosynthesis. In terms of biological role, catalyzes the rearrangement of 1-deoxy-D-xylulose 5-phosphate (DXP) to produce the thiazole phosphate moiety of thiamine. Sulfur is provided by the thiocarboxylate moiety of the carrier protein ThiS. In vitro, sulfur can be provided by H(2)S. The polypeptide is Thiazole synthase (Nitrosomonas eutropha (strain DSM 101675 / C91 / Nm57)).